Consider the following 167-residue polypeptide: Shikimate kinase (167 aa).

12 to 17 contributes to the ATP binding site; it reads GSGKTT. Thr-16 is a Mg(2+) binding site. Substrate-binding residues include Asp-34, Arg-58, and Gly-80. Arg-117 contributes to the ATP binding site. Residue Arg-135 participates in substrate binding. Arg-152 contacts ATP.

This sequence belongs to the shikimate kinase family. As to quaternary structure, monomer. Mg(2+) serves as cofactor.

Its subcellular location is the cytoplasm. It carries out the reaction shikimate + ATP = 3-phosphoshikimate + ADP + H(+). It functions in the pathway metabolic intermediate biosynthesis; chorismate biosynthesis; chorismate from D-erythrose 4-phosphate and phosphoenolpyruvate: step 5/7. In terms of biological role, catalyzes the specific phosphorylation of the 3-hydroxyl group of shikimic acid using ATP as a cosubstrate. This is Shikimate kinase from Salinispora arenicola (strain CNS-205).